The chain runs to 285 residues: HTH-type transcriptional regulator MurR (285 aa).

Positions 1 to 77 constitute an HTH rpiR-type domain; that stretch reads MLYLTKIRNA…MALIGEYSAS (77 aa). Residues 37-56 constitute a DNA-binding region (H-T-H motif); it reads SRKMAKQLGISQSSIVKFAQ. An SIS domain is found at 128-268; that stretch reads IIEVISKAPF…FVGLVQLNDV (141 aa).

As to quaternary structure, homotetramer.

It functions in the pathway amino-sugar metabolism; N-acetylmuramate degradation [regulation]. Functionally, represses the expression of the murPQ operon involved in the uptake and degradation of N-acetylmuramic acid (MurNAc). Binds to two adjacent inverted repeats within the operator region. MurNAc 6-phosphate, the substrate of MurQ, is the specific inducer that weakens binding of MurR to the operator. The polypeptide is HTH-type transcriptional regulator MurR (Escherichia coli O157:H7).